Reading from the N-terminus, the 203-residue chain is Putative B3 domain-containing protein At1g50220 (203 aa).

Positions 99–195 form a DNA-binding region, TF-B3; that stretch reads DIVGNVALPK…KFIVLNFQHK (97 aa).

The protein resides in the nucleus. The protein is Putative B3 domain-containing protein At1g50220 of Arabidopsis thaliana (Mouse-ear cress).